The following is a 60-amino-acid chain: DNA gyrase inhibitor YacG (60 aa).

Residues Cys15, Cys18, Cys30, and Cys34 each contribute to the Zn(2+) site.

It belongs to the DNA gyrase inhibitor YacG family. As to quaternary structure, interacts with GyrB. It depends on Zn(2+) as a cofactor.

Inhibits all the catalytic activities of DNA gyrase by preventing its interaction with DNA. Acts by binding directly to the C-terminal domain of GyrB, which probably disrupts DNA binding by the gyrase. The chain is DNA gyrase inhibitor YacG from Nitrobacter hamburgensis (strain DSM 10229 / NCIMB 13809 / X14).